The sequence spans 208 residues: Ribosomal RNA large subunit methyltransferase E (208 aa).

Gly63, Trp65, Asp83, Asp99, and Asp124 together coordinate S-adenosyl-L-methionine. Catalysis depends on Lys164, which acts as the Proton acceptor.

Belongs to the class I-like SAM-binding methyltransferase superfamily. RNA methyltransferase RlmE family.

It localises to the cytoplasm. It catalyses the reaction uridine(2552) in 23S rRNA + S-adenosyl-L-methionine = 2'-O-methyluridine(2552) in 23S rRNA + S-adenosyl-L-homocysteine + H(+). Specifically methylates the uridine in position 2552 of 23S rRNA at the 2'-O position of the ribose in the fully assembled 50S ribosomal subunit. The sequence is that of Ribosomal RNA large subunit methyltransferase E from Hamiltonella defensa subsp. Acyrthosiphon pisum (strain 5AT).